A 1383-amino-acid polypeptide reads, in one-letter code: DNA-directed RNA polymerase subunit beta (1383 aa).

Belongs to the RNA polymerase beta chain family. The RNAP catalytic core consists of 2 alpha, 1 beta, 1 beta' and 1 omega subunit. When a sigma factor is associated with the core the holoenzyme is formed, which can initiate transcription.

It catalyses the reaction RNA(n) + a ribonucleoside 5'-triphosphate = RNA(n+1) + diphosphate. In terms of biological role, DNA-dependent RNA polymerase catalyzes the transcription of DNA into RNA using the four ribonucleoside triphosphates as substrates. This is DNA-directed RNA polymerase subunit beta from Xanthomonas axonopodis pv. citri (strain 306).